Here is a 348-residue protein sequence, read N- to C-terminus: Anthranilate phosphoribosyltransferase (348 aa).

5-phospho-alpha-D-ribose 1-diphosphate is bound by residues Gly83, 86-87 (GD), Thr91, 93-96 (NVST), 111-119 (KHGNRAASS), and Thr123. Gly83 lines the anthranilate pocket. Residue Ser95 coordinates Mg(2+). Residue Asn114 coordinates anthranilate. Arg169 is an anthranilate binding site. Mg(2+) contacts are provided by Asp227 and Glu228.

Belongs to the anthranilate phosphoribosyltransferase family. In terms of assembly, homodimer. Mg(2+) serves as cofactor.

The enzyme catalyses N-(5-phospho-beta-D-ribosyl)anthranilate + diphosphate = 5-phospho-alpha-D-ribose 1-diphosphate + anthranilate. It functions in the pathway amino-acid biosynthesis; L-tryptophan biosynthesis; L-tryptophan from chorismate: step 2/5. In terms of biological role, catalyzes the transfer of the phosphoribosyl group of 5-phosphorylribose-1-pyrophosphate (PRPP) to anthranilate to yield N-(5'-phosphoribosyl)-anthranilate (PRA). The chain is Anthranilate phosphoribosyltransferase from Thermobifida fusca (strain YX).